The sequence spans 248 residues: 5'-nucleotidase SurE (248 aa).

A divalent metal cation is bound by residues Asp8, Asp9, Ser39, and Asn91.

Belongs to the SurE nucleotidase family. The cofactor is a divalent metal cation.

The protein resides in the cytoplasm. It catalyses the reaction a ribonucleoside 5'-phosphate + H2O = a ribonucleoside + phosphate. Functionally, nucleotidase that shows phosphatase activity on nucleoside 5'-monophosphates. In Neisseria meningitidis serogroup A / serotype 4A (strain DSM 15465 / Z2491), this protein is 5'-nucleotidase SurE.